Consider the following 303-residue polypeptide: Probable serine acetyltransferase 1 (303 aa).

Disordered stretches follow at residues 1 to 36 (MTAG…ESDA) and 271 to 290 (NPAR…ESMD).

Belongs to the transferase hexapeptide repeat family. In terms of assembly, homomultimer.

The enzyme catalyses L-serine + acetyl-CoA = O-acetyl-L-serine + CoA. It functions in the pathway amino-acid biosynthesis; L-cysteine biosynthesis; L-cysteine from L-serine: step 1/2. The chain is Probable serine acetyltransferase 1 (SAT1) from Oryza sativa subsp. japonica (Rice).